The primary structure comprises 386 residues: GLABROUS1 enhancer-binding protein-like 1 (386 aa).

Disordered regions lie at residues 1 to 58 (MVTP…KKKK) and 197 to 314 (ESGE…DDDD). Residues 216–226 (EEIRDNDETAR) show a composition bias toward basic and acidic residues. The stretch at 221 to 285 (NDETARKAQQ…LKEHEEVANT (65 aa)) forms a coiled coil. A compositionally biased stretch (polar residues) spans 257 to 267 (DNNGTTQIAQQ). A compositionally biased stretch (low complexity) spans 291-300 (NGAAKTTENG). The tract at residues 354–375 (LSDEWKALCVEERRLNIKKLRF) is non-canonical leucine-zipper.

Belongs to the GeBP family. As to quaternary structure, homo- and heterodimers. Interacts with GEBP, GPL2 and GPL3. Interacts with GEBP. Expressed in the apical meristem and young leaf primordia. Detected in the vascular tissues of cotyledons and leaves, in hydathodes and at the base of flowers and siliques, but not in roots.

It is found in the nucleus. In terms of biological role, probable transcription factor. May play redundant roles with GEBP and GPL2 in cytokinin responses by regulating the transcript levels of type-A ARR response genes. Involved in stress responses. Plays a repressive role in cell expansion by counteracting the positive role of CPR5 in this process, but does not regulate cell proliferation or endoreduplication. This is GLABROUS1 enhancer-binding protein-like 1 from Arabidopsis thaliana (Mouse-ear cress).